The primary structure comprises 184 residues: J-type co-chaperone JAC1, mitochondrial (184 aa).

The transit peptide at M1 to F10 directs the protein to the mitochondrion. The J domain maps to T13–L82. Positions H48–D50 match the HSP70 binding motif. The interaction with ISU1 stretch occupies residues D71–H184.

The protein belongs to the HscB family. As to quaternary structure, interacts with ISU1 and SSQ1.

The protein localises to the mitochondrion matrix. In terms of biological role, co-chaperone required for the assembly of iron-sulfur (Fe/S) clusters in mitochondria. Stimulates the ATPase activity of its specialized Hsp70 chaperone partner SSQ1, to mediate the transfer of iron-sulfur clusters from ISU1 to GRX5. Binds to the substrate protein ISU1 and targets it to SSQ1. The polypeptide is J-type co-chaperone JAC1, mitochondrial (Saccharomyces cerevisiae (strain ATCC 204508 / S288c) (Baker's yeast)).